We begin with the raw amino-acid sequence, 284 residues long: Bifunctional protein FolD (284 aa).

Residues 165–167, Ser-190, and Val-231 each bind NADP(+); that span reads GRS.

The protein belongs to the tetrahydrofolate dehydrogenase/cyclohydrolase family. Homodimer.

The catalysed reaction is (6R)-5,10-methylene-5,6,7,8-tetrahydrofolate + NADP(+) = (6R)-5,10-methenyltetrahydrofolate + NADPH. The enzyme catalyses (6R)-5,10-methenyltetrahydrofolate + H2O = (6R)-10-formyltetrahydrofolate + H(+). Its pathway is one-carbon metabolism; tetrahydrofolate interconversion. In terms of biological role, catalyzes the oxidation of 5,10-methylenetetrahydrofolate to 5,10-methenyltetrahydrofolate and then the hydrolysis of 5,10-methenyltetrahydrofolate to 10-formyltetrahydrofolate. The protein is Bifunctional protein FolD of Ruminiclostridium cellulolyticum (strain ATCC 35319 / DSM 5812 / JCM 6584 / H10) (Clostridium cellulolyticum).